We begin with the raw amino-acid sequence, 365 residues long: Methionine import ATP-binding protein MetN (365 aa).

Residues 17 to 256 (IVFEHVTKEF…PQSETTQRFL (240 aa)) form the ABC transporter domain. 53–60 (GHSGAGKS) is an ATP binding site. The tract at residues 346–365 (SNSAAPTTSATVPTPTEEAH) is disordered.

Belongs to the ABC transporter superfamily. Methionine importer (TC 3.A.1.24) family. As to quaternary structure, the complex is composed of two ATP-binding proteins (MetN), two transmembrane proteins (MetI) and a solute-binding protein (MetQ).

The protein localises to the cell membrane. The catalysed reaction is L-methionine(out) + ATP + H2O = L-methionine(in) + ADP + phosphate + H(+). It catalyses the reaction D-methionine(out) + ATP + H2O = D-methionine(in) + ADP + phosphate + H(+). Functionally, part of the ABC transporter complex MetNIQ involved in methionine import. Responsible for energy coupling to the transport system. This Cutibacterium acnes (strain DSM 16379 / KPA171202) (Propionibacterium acnes) protein is Methionine import ATP-binding protein MetN.